The sequence spans 345 residues: Acetylserotonin O-methyltransferase (345 aa).

S-adenosyl-L-methionine is bound by residues Y147, W164, D210, 235 to 237 (GDF), and R252. H255 (proton donor/acceptor) is an active-site residue. Substrate-binding residues include D256, N302, and Q306.

It belongs to the class I-like SAM-binding methyltransferase superfamily. Cation-independent O-methyltransferase family. In terms of assembly, homodimer. As to expression, expressed in the pineal gland (at protein level). Not detectable in retina, nor in liver.

It catalyses the reaction N-acetylserotonin + S-adenosyl-L-methionine = melatonin + S-adenosyl-L-homocysteine + H(+). It participates in aromatic compound metabolism; melatonin biosynthesis; melatonin from serotonin: step 1/2. Functionally, catalyzes the transfer of a methyl group onto N-acetylserotonin, producing melatonin (N-acetyl-5-methoxytryptamine). This chain is Acetylserotonin O-methyltransferase (ASMT), found in Bos taurus (Bovine).